Reading from the N-terminus, the 257-residue chain is Probable amino-acid ABC transporter ATP-binding protein HI_1078 (257 aa).

In terms of domain architecture, ABC transporter spans 4–244 (LKVSNIQKNF…PQHERTKQFL (241 aa)). 36 to 43 (GPSGSGKT) provides a ligand contact to ATP.

The protein belongs to the ABC transporter superfamily.

It localises to the cell inner membrane. Functionally, probably part of a binding-protein-dependent transport system for an amino acid. Probably responsible for energy coupling to the transport system. The sequence is that of Probable amino-acid ABC transporter ATP-binding protein HI_1078 from Haemophilus influenzae (strain ATCC 51907 / DSM 11121 / KW20 / Rd).